Consider the following 205-residue polypeptide: Outer-membrane lipoprotein carrier protein (205 aa).

The N-terminal stretch at 1–19 (MKKIIICFIFVFSINVSFA) is a signal peptide.

It belongs to the LolA family. In terms of assembly, monomer.

Its subcellular location is the periplasm. Participates in the translocation of lipoproteins from the inner membrane to the outer membrane. Only forms a complex with a lipoprotein if the residue after the N-terminal Cys is not an aspartate (The Asp acts as a targeting signal to indicate that the lipoprotein should stay in the inner membrane). The sequence is that of Outer-membrane lipoprotein carrier protein from Francisella tularensis subsp. holarctica (strain LVS).